Here is a 206-residue protein sequence, read N- to C-terminus: Protein DEHYDRATION-INDUCED 19 (206 aa).

Thr-105 bears the Phosphothreonine mark. At Ser-107 the chain carries Phosphoserine. Positions 142 to 167 (SSFISPTRSQSSPAPRQTKNVSEDKQ) are disordered. The span at 143 to 161 (SFISPTRSQSSPAPRQTKN) shows a compositional bias: polar residues.

It belongs to the Di19 family. Interacts with ADO2/LKP2, CPK11 and CPK4. Weak interaction with CPK12 and no interactions with CPK1, CPK5 or CPK26. Post-translationally, phosphorylated within the NLS/NES region. As to expression, expressed in seedlings, roots, leaves, stems, flowers and siliques.

Its subcellular location is the nucleus. This chain is Protein DEHYDRATION-INDUCED 19 (DI19-1), found in Arabidopsis thaliana (Mouse-ear cress).